A 377-amino-acid chain; its full sequence is DNA-directed RNA polymerase subunit alpha (377 aa).

An alpha N-terminal domain (alpha-NTD) region spans residues 1-259; that stretch reads MSDSSHNLLY…KHFSVFEKMD (259 aa). An alpha C-terminal domain (alpha-CTD) region spans residues 279–377; it reads ILHKLVLGIN…KIRSSKNTKG (99 aa).

The protein belongs to the RNA polymerase alpha chain family. As to quaternary structure, homodimer. The RNAP catalytic core consists of 2 alpha, 1 beta, 1 beta' and 1 omega subunit. When a sigma factor is associated with the core the holoenzyme is formed, which can initiate transcription.

The enzyme catalyses RNA(n) + a ribonucleoside 5'-triphosphate = RNA(n+1) + diphosphate. DNA-dependent RNA polymerase catalyzes the transcription of DNA into RNA using the four ribonucleoside triphosphates as substrates. The chain is DNA-directed RNA polymerase subunit alpha from Chlamydia trachomatis serovar L2 (strain ATCC VR-902B / DSM 19102 / 434/Bu).